The sequence spans 113 residues: UPF0212 protein MmarC6_1165 (113 aa).

It belongs to the UPF0212 family.

The protein is UPF0212 protein MmarC6_1165 of Methanococcus maripaludis (strain C6 / ATCC BAA-1332).